The primary structure comprises 801 residues: Cation/H(+) antiporter 28 (801 aa).

A run of 12 helical transmembrane segments spans residues 24 to 44 (ALKILVFIAIFVVRTLLHYLM), 77 to 97 (SITLNNIIEFGMICHMFVMGL), 113 to 133 (FIAYTSMITTFVLAFVTTPFL), 140 to 160 (PYIFSLALSLMASSTGSPILT), 179 to 199 (AAGVHTDMISTLLYCFGFIFF), 216 to 236 (LLMFCLFLAQVTFTSIVSPIF), 252 to 272 (GSHLVMSLAFVVLICSFPTWP), 275 to 292 (SMYNPILSAFTAGLFLPN), 304 to 324 (INYLLSTVFYPIFFFWVGFII), 343 to 363 (LLGTVIAGKVTGTVLCGLLLG), 371 to 391 (SLGLLLTTKGHFHVYLAALAI), and 403 to 423 (LIIFIIVFTVVYSPFVVMDII).

The protein belongs to the monovalent cation:proton antiporter 2 (CPA2) transporter (TC 2.A.37) family. CHX (TC 2.A.37.4) subfamily. As to expression, specifically expressed in pollen.

Its subcellular location is the membrane. May operate as a cation/H(+) antiporter. This chain is Cation/H(+) antiporter 28 (CHX28), found in Arabidopsis thaliana (Mouse-ear cress).